Here is a 259-residue protein sequence, read N- to C-terminus: ATP synthase subunit a (259 aa).

5 consecutive transmembrane segments (helical) span residues 29 to 49 (TVNI…IWLF), 89 to 109 (LIAP…AMDL), 132 to 154 (SADV…FYSI), 209 to 229 (IFIL…NVPW), and 230 to 250 (AIFH…LTIV).

Belongs to the ATPase A chain family. F-type ATPases have 2 components, CF(1) - the catalytic core - and CF(0) - the membrane proton channel. CF(1) has five subunits: alpha(3), beta(3), gamma(1), delta(1), epsilon(1). CF(0) has three main subunits: a(1), b(2) and c(9-12). The alpha and beta chains form an alternating ring which encloses part of the gamma chain. CF(1) is attached to CF(0) by a central stalk formed by the gamma and epsilon chains, while a peripheral stalk is formed by the delta and b chains.

The protein resides in the cell inner membrane. Functionally, key component of the proton channel; it plays a direct role in the translocation of protons across the membrane. The chain is ATP synthase subunit a from Tolumonas auensis (strain DSM 9187 / NBRC 110442 / TA 4).